A 347-amino-acid polypeptide reads, in one-letter code: NHL repeat-containing protein 3 (347 aa).

The N-terminal stretch at 1-22 (MARAWVCLAGAAFFLSCLVLHS) is a signal peptide. An NHL 1 repeat occupies 47 to 93 (RLDLGWPKNSEYFTGATFCVAVDSLNGLVYVAQRGDNIPKVLVFSED). N-linked (GlcNAc...) asparagine glycosylation occurs at Asn101. NHL repeat units follow at residues 150 to 196 (TPGK…LSQD) and 200 to 243 (LWLR…FDKD). 2 N-linked (GlcNAc...) asparagine glycosylation sites follow: Asn206 and Asn278. The NHL 4 repeat unit spans residues 294–338 (GDCSVVSTIQLADQVLPHLLEVDRKTGAVYVAEIGAKQIQKYIPW).

This chain is NHL repeat-containing protein 3 (Nhlrc3), found in Mus musculus (Mouse).